A 224-amino-acid polypeptide reads, in one-letter code: Probable amino-acid permease protein YxeN (224 aa).

Transmembrane regions (helical) follow at residues 3–23 (TIDW…LPIT), 24–44 (LFMA…LALI), 58–78 (LYIS…IYYG), 91–111 (ALTA…AEIF), 157–177 (FIGL…EMFA), and 190–210 (FETY…YSIL). Positions 20–211 (LPITLFMAIA…VLTIIYSILQ (192 aa)) constitute an ABC transmembrane type-1 domain.

The protein belongs to the binding-protein-dependent transport system permease family. In terms of assembly, the complex is composed of two ATP-binding proteins (YxeO), two transmembrane proteins (YxeN) and a solute-binding protein (YxeM).

The protein resides in the cell membrane. Probably part of the ABC transporter complex YxeMNO that could be involved in amino-acid import. May transport S-methylcysteine. Probably responsible for the translocation of the substrate across the membrane. In Bacillus subtilis (strain 168), this protein is Probable amino-acid permease protein YxeN (yxeN).